Consider the following 170-residue polypeptide: Adenine phosphoribosyltransferase (170 aa).

Belongs to the purine/pyrimidine phosphoribosyltransferase family. Homodimer.

Its subcellular location is the cytoplasm. It catalyses the reaction AMP + diphosphate = 5-phospho-alpha-D-ribose 1-diphosphate + adenine. It functions in the pathway purine metabolism; AMP biosynthesis via salvage pathway; AMP from adenine: step 1/1. Its function is as follows. Catalyzes a salvage reaction resulting in the formation of AMP, that is energically less costly than de novo synthesis. This chain is Adenine phosphoribosyltransferase, found in Mycoplasmopsis pulmonis (strain UAB CTIP) (Mycoplasma pulmonis).